The sequence spans 24 residues: Cupiennin-5a (24 aa).

As to expression, expressed by the venom gland.

It localises to the secreted. This is Cupiennin-5a from Cupiennius salei (American wandering spider).